The chain runs to 406 residues: NIPA-like protein 3 (406 aa).

4 consecutive transmembrane segments (helical) span residues 33–53 (NLIG…ALNL), 76–96 (WWLG…SYAF), 101–121 (LIVP…IIFI), and 135–155 (VLSF…VTFA). Residue Asn166 is glycosylated (N-linked (GlcNAc...) asparagine). 5 helical membrane-spanning segments follow: residues 171-191 (LVSW…CLLL), 202-222 (IVVI…TVKA), 240-260 (PIFY…AAFL), 271-291 (LIAS…GAIF), and 300-320 (VLHI…VFLI). Phosphoserine is present on Ser372.

It belongs to the NIPA family.

The protein localises to the membrane. The chain is NIPA-like protein 3 (NIPAL3) from Homo sapiens (Human).